A 361-amino-acid chain; its full sequence is MSFKRKAAPQIAPTNLPTGVRLSSKDARWITSSGSSSFDYYLSGGIPMKSLLVIEEDSMDYASVLLKFFAAEGLKQDHVIWLGPSIGEMWFRQLPGDSDRPNKNENSAGEDNHSSPPSKNPQQERMKIAWRYEQVSKTKAPTLDMIPPGYTHSFDLSKNLIVKSDMKYAVSPFPLETGSNPYAPVIESLTRFLSTLTPGTVCRLVLPSILSPAFYSIRATHPQHFIRFIHTLSSLIKCTTSVHLICMCSVPSTLFSRDCEQIFWLENLASAVFSLHPFPVKETVNGLVTQPLGLFRIHKLPLALPFTNHANSNEAGDLSFTVSKRRFTIEPWVLPPLDDEQKDTKISNTNPQKQPVKSLDF.

2 disordered regions span residues 93-124 (QLPGDSDRPNKNENSAGEDNHSSPPSKNPQQE) and 338-361 (DDEQKDTKISNTNPQKQPVKSLDF). 2 stretches are compositionally biased toward polar residues: residues 104–121 (NENSAGEDNHSSPPSKNP) and 346–355 (ISNTNPQKQP).

It belongs to the ELP4 family. Component of the elongator complex.

The protein localises to the cytoplasm. The protein resides in the nucleus. It participates in tRNA modification; 5-methoxycarbonylmethyl-2-thiouridine-tRNA biosynthesis. Functionally, component of the elongator complex, a multiprotein complex which is required for multiple tRNA modifications, including mcm5U (5-methoxycarbonylmethyl uridine), mcm5s2U (5-methoxycarbonylmethyl-2-thiouridine), and ncm5U (5-carbamoylmethyl uridine). The elongator complex catalyzes formation of carboxymethyluridine in the wobble base at position 34 in tRNAs. The polypeptide is Elongator complex protein 4 (Schizosaccharomyces pombe (strain 972 / ATCC 24843) (Fission yeast)).